We begin with the raw amino-acid sequence, 441 residues long: Inositol hexakisphosphate kinase 1 (441 aa).

The interval 100 to 175 (ETVEQDDTTE…MLDGNSGLSS (76 aa)) is disordered. The span at 113-123 (PRRKHSRRSLH) shows a compositional bias: basic residues. The segment covering 137–149 (SLSLETSESSQEA) has biased composition (low complexity). The segment covering 150–160 (KSPKVELHSHS) has biased composition (basic and acidic residues). The residue at position 151 (S151) is a Phosphoserine. Position 220–228 (220–228 (PCVLDLKMG)) interacts with substrate. Residues 370–392 (SSCGPSTSPSNTSPEAGPSSQPK) are disordered. Residues 372–391 (CGPSTSPSNTSPEAGPSSQP) show a composition bias toward polar residues.

The protein belongs to the inositol phosphokinase (IPK) family.

The protein resides in the cytoplasm. The protein localises to the nucleus. It catalyses the reaction 1D-myo-inositol hexakisphosphate + ATP = 5-diphospho-1D-myo-inositol 1,2,3,4,6-pentakisphosphate + ADP. The catalysed reaction is 1-diphospho-1D-myo-inositol 2,3,4,5,6-pentakisphosphate + ATP + H(+) = 1,5-bis(diphospho)-1D-myo-inositol 2,3,4,6-tetrakisphosphate + ADP. Its function is as follows. Converts inositol hexakisphosphate (InsP6) to diphosphoinositol pentakisphosphate (InsP7/PP-InsP5). Converts 1,3,4,5,6-pentakisphosphate (InsP5) to PP-InsP4. This is Inositol hexakisphosphate kinase 1 (IP6K1) from Homo sapiens (Human).